The primary structure comprises 232 residues: Chromosome partition protein MukE (232 aa).

The disordered stretch occupies residues 203–232 (HTKEPSQGSLLSEEDQEEQAQEEMTEEGEA). Residues 214 to 232 (SEEDQEEQAQEEMTEEGEA) are compositionally biased toward acidic residues.

The protein belongs to the MukE family. As to quaternary structure, interacts, and probably forms a ternary complex, with MukF and MukB. The complex formation is stimulated by calcium or magnesium.

It is found in the cytoplasm. The protein localises to the nucleoid. Its function is as follows. Involved in chromosome condensation, segregation and cell cycle progression. May participate in facilitating chromosome segregation by condensation DNA from both sides of a centrally located replisome during cell division. Probably acts via its interaction with MukB and MukF. The sequence is that of Chromosome partition protein MukE from Vibrio parahaemolyticus serotype O3:K6 (strain RIMD 2210633).